Reading from the N-terminus, the 472-residue chain is ATP synthase subunit beta (472 aa).

An ATP-binding site is contributed by 157 to 164 (GGAGVGKT).

The protein belongs to the ATPase alpha/beta chains family. F-type ATPases have 2 components, CF(1) - the catalytic core - and CF(0) - the membrane proton channel. CF(1) has five subunits: alpha(3), beta(3), gamma(1), delta(1), epsilon(1). CF(0) has three main subunits: a(1), b(2) and c(9-12). The alpha and beta chains form an alternating ring which encloses part of the gamma chain. CF(1) is attached to CF(0) by a central stalk formed by the gamma and epsilon chains, while a peripheral stalk is formed by the delta and b chains.

The protein localises to the cell membrane. It carries out the reaction ATP + H2O + 4 H(+)(in) = ADP + phosphate + 5 H(+)(out). Functionally, produces ATP from ADP in the presence of a proton gradient across the membrane. The catalytic sites are hosted primarily by the beta subunits. This chain is ATP synthase subunit beta, found in Desulforudis audaxviator (strain MP104C).